The chain runs to 503 residues: Ferulic acid decarboxylase 1 (503 aa).

Mn(2+) is bound by residues Asn-170, His-193, and Glu-236. Prenylated FMN-binding positions include 170–175 (NWSIAR), 192–193 (QH), and Glu-236. Glu-285 functions as the Proton donor in the catalytic mechanism. Lys-394 lines the prenylated FMN pocket.

Belongs to the UbiD family. UbiD-like/FDC subfamily. As to quaternary structure, homodimer. May form higher order oligomers. The cofactor is Mn(2+). It depends on prenylated FMN as a cofactor.

It is found in the cytoplasm. The enzyme catalyses (E)-4-coumarate + H(+) = 4-vinylphenol + CO2. It catalyses the reaction (E)-cinnamate + H(+) = styrene + CO2. The catalysed reaction is (E)-ferulate + H(+) = 2-methoxy-4-vinylphenol + CO2. In terms of biological role, catalyzes the reversible decarboxylation of aromatic carboxylic acids like ferulic acid, p-coumaric acid or cinnamic acid, producing the corresponding vinyl derivatives 4-vinylphenol, 4-vinylguaiacol, and styrene, respectively, which play the role of aroma metabolites. Not essential for ubiquinone synthesis. The protein is Ferulic acid decarboxylase 1 of Saccharomyces cerevisiae (strain ATCC 204508 / S288c) (Baker's yeast).